The primary structure comprises 289 residues: Phosphoribulokinase (289 aa).

ATP is bound at residue 12–20; sequence GSSGAGTTT.

The protein belongs to the phosphoribulokinase family.

The enzyme catalyses D-ribulose 5-phosphate + ATP = D-ribulose 1,5-bisphosphate + ADP + H(+). It functions in the pathway carbohydrate biosynthesis; Calvin cycle. This Sinorhizobium medicae (strain WSM419) (Ensifer medicae) protein is Phosphoribulokinase (cbbP).